Consider the following 248-residue polypeptide: tRNA (guanine-N(1)-)-methyltransferase (248 aa).

S-adenosyl-L-methionine contacts are provided by residues glycine 116 and 135–140 (IGDFVL).

The protein belongs to the RNA methyltransferase TrmD family. Homodimer.

It localises to the cytoplasm. The enzyme catalyses guanosine(37) in tRNA + S-adenosyl-L-methionine = N(1)-methylguanosine(37) in tRNA + S-adenosyl-L-homocysteine + H(+). Functionally, specifically methylates guanosine-37 in various tRNAs. The protein is tRNA (guanine-N(1)-)-methyltransferase of Anaeromyxobacter sp. (strain Fw109-5).